Here is a 363-residue protein sequence, read N- to C-terminus: 3-dehydroquinate synthase (363 aa).

Residues 107 to 111, 131 to 132, Lys144, and Lys153 contribute to the NAD(+) site; these read GVIGD and TT. The Zn(2+) site is built by Glu186, His251, and His268.

It belongs to the sugar phosphate cyclases superfamily. Dehydroquinate synthase family. NAD(+) is required as a cofactor. Requires Co(2+) as cofactor. It depends on Zn(2+) as a cofactor.

The protein resides in the cytoplasm. The catalysed reaction is 7-phospho-2-dehydro-3-deoxy-D-arabino-heptonate = 3-dehydroquinate + phosphate. It functions in the pathway metabolic intermediate biosynthesis; chorismate biosynthesis; chorismate from D-erythrose 4-phosphate and phosphoenolpyruvate: step 2/7. Catalyzes the conversion of 3-deoxy-D-arabino-heptulosonate 7-phosphate (DAHP) to dehydroquinate (DHQ). This Nostoc sp. (strain PCC 7120 / SAG 25.82 / UTEX 2576) protein is 3-dehydroquinate synthase.